Here is a 434-residue protein sequence, read N- to C-terminus: Septin-6 (434 aa).

Residue Ala2 is modified to N-acetylalanine. Phosphoserine is present on Ser27. The Septin-type G domain maps to 39-305; the sequence is QGFCFNILCV…ELYRRCKLEE (267 aa). The tract at residues 49-56 is G1 motif; that stretch reads GETGLGKS. Residues 49 to 56, Gly104, 185 to 193, Gly239, and Arg254 each bind GTP; these read GETGLGKS and KADAISKSE. Residues 101–104 are G3 motif; it reads STVG. Residues 184–187 form a G4 motif region; sequence AKAD. A coiled-coil region spans residues 321–409; it reads QETYEAKRNE…KTAAELLQSQ (89 aa). The residue at position 367 (Lys367) is an N6-acetyllysine. Positions 405 to 434 are disordered; it reads LLQSQGSQAGGSQTLKRDKEKKNNPWLCTE. Residues 407–417 are compositionally biased toward low complexity; that stretch reads QSQGSQAGGSQ. Ser416 bears the Phosphoserine mark. Thr418 is modified (phosphothreonine).

This sequence belongs to the TRAFAC class TrmE-Era-EngA-EngB-Septin-like GTPase superfamily. Septin GTPase family. Septins polymerize into heterooligomeric protein complexes that form filaments, and associate with cellular membranes, actin filaments and microtubules. GTPase activity is required for filament formation. Filaments are assembled from asymmetrical heterotrimers, composed of SEPTIN2, SEPTIN6 and SEPTIN7 that associate head-to-head to form a hexameric unit. Within the trimer, directly interacts with SEPTIN2 and SEPTIN7. Also interacts with SEPTIN9 and SEPTIN12. Interaction with SEPTIN12 alters filament structure. Component of a septin core octameric complex consisting of SEPTIN12, SEPTIN7, SEPTIN6 and SEPTIN2 or SEPTIN4 in the order 12-7-6-2-2-6-7-12 or 12-7-6-4-4-6-7-12 and located in the sperm annulus. Interacts with SOCS7. Interacts with HNRNPA1. In terms of assembly, (Microbial infection) Interacts with HCV NS5B. In terms of tissue distribution, widely expressed.

It localises to the cytoplasm. Its subcellular location is the cytoskeleton. The protein resides in the spindle. It is found in the chromosome. The protein localises to the centromere. It localises to the kinetochore. Its subcellular location is the cleavage furrow. The protein resides in the midbody. It is found in the cell projection. The protein localises to the cilium. It localises to the flagellum. Functionally, filament-forming cytoskeletal GTPase. Required for normal organization of the actin cytoskeleton. Involved in cytokinesis. May play a role in HCV RNA replication. Forms a filamentous structure with SEPTIN12, SEPTIN6, SEPTIN2 and probably SEPTIN4 at the sperm annulus which is required for the structural integrity and motility of the sperm tail during postmeiotic differentiation. In Homo sapiens (Human), this protein is Septin-6.